The sequence spans 251 residues: Triosephosphate isomerase (251 aa).

9–11 serves as a coordination point for substrate; sequence NWK. Residue H94 is the Electrophile of the active site. Catalysis depends on E163, which acts as the Proton acceptor. Residues G169, S209, and 230 to 231 each bind substrate; that span reads GG.

The protein belongs to the triosephosphate isomerase family. As to quaternary structure, homodimer.

Its subcellular location is the cytoplasm. It catalyses the reaction D-glyceraldehyde 3-phosphate = dihydroxyacetone phosphate. Its pathway is carbohydrate biosynthesis; gluconeogenesis. The protein operates within carbohydrate degradation; glycolysis; D-glyceraldehyde 3-phosphate from glycerone phosphate: step 1/1. In terms of biological role, involved in the gluconeogenesis. Catalyzes stereospecifically the conversion of dihydroxyacetone phosphate (DHAP) to D-glyceraldehyde-3-phosphate (G3P). The chain is Triosephosphate isomerase from Dehalococcoides mccartyi (strain ATCC BAA-2266 / KCTC 15142 / 195) (Dehalococcoides ethenogenes (strain 195)).